The sequence spans 1026 residues: MRFFALFIYRPVATILIAAAITLCGILGFRLLPVAPLPQVDFPVIMVSASLPGASPETMASSVATPLERSLGRIAGVNEMTSSSSLGSTRIILEFNFDRDINGAARDVQAAINAAQSLLPGGMPSRPTYRKANPSDAPIMILTLTSESWSQGKLYDFASTQLAQTIAQIDGVGDVDVGGSSLPAVRVGLNPQALFNQGVSLDEVREAIDSANVRRPQGAIEDSVHRWQIQTNDELKTAAEYQPLIIHYNNGAAVRLGDVASVTDSVQDVRNAGMTNAKPAILLMIRKLPEANIIQTVDGIRAKLPELRAMIPAAIDLQIAQDRSPTIRASLQEVEETLAISVALVILVVFLFLRSGRATLIPAVAVPVSLIGTFAAMYLCGFSLNNLSLMALTIATGFVVDDAIVVLENIARHLEAGMKPLQAALQGTREVGFTVISMSLSLVAVFLPLLLMGGLPGRLLREFAVTLSVAIGISLVVSLTLTPMMCGWMLKSSKPRTQPRKRGVGRLLVALQQGYGTSLKWVLNHTRLVGVVFLGTVALNIWLYIAIPKTFFPEQDTGVLMGGIQADQSISFQAMRGKLQDFMKIIRDDPAVNNVTGFTGGSRVNSGMMFITLKPRGERKETAQQIIDRLRVKLAKEPGARLFLMAVQDIRVGGRQANASYQYTLLSDSLAALREWEPKIRKALSALPQLADVNSDQQDNGAEMNLIYDRDTMSRLGIDVQAANSLLNNAFGQRQISTIYQPMNQYKVVMEVDPRYSQDISALEKMFVINRDGKAIPLSYFAQWRPANAPLSVNHQGLSAASTIAFNLPTGTSLSQATEAINRTMTQLGVPSTVRGSFSGTAQVFQQTMNSQLILIVAAIATVYIVLGILYESYVHPLTILSTLPSAGVGALLALELFNAPFSLIALIGIMLLIGIVKKNAIMMVDFALEAQRSGGLTPAQAIFQACLLRFRPIMMTTLAALFGALPLVLSGGDGSELRQPLGITIVGGLVMSQLLTLYTTPVVYLFFDRLRLRFSRKNSKPVVEI.

11 consecutive transmembrane segments (helical) span residues 15–35 (ILIAAAITLCGILGFRLLPVA), 333–353 (EVEETLAISVALVILVVFLFL), 360–380 (LIPAVAVPVSLIGTFAAMYLC), 387–407 (LSLMALTIATGFVVDDAIVVL), 431–451 (VGFTVISMSLSLVAVFLPLLL), 463–483 (FAVTLSVAIGISLVVSLTLTP), 528–548 (LVGVVFLGTVALNIWLYIAIP), 853–873 (LILIVAAIATVYIVLGILYES), 897–917 (LFNAPFSLIALIGIMLLIGIV), 953–973 (PIMMTTLAALFGALPLVLSGG), and 984–1004 (ITIVGGLVMSQLLTLYTTPVV).

The protein belongs to the resistance-nodulation-cell division (RND) (TC 2.A.6) family. MdtC subfamily. In terms of assembly, part of a tripartite efflux system composed of MdtA, MdtB and MdtC. MdtC forms a heteromultimer with MdtB.

Its subcellular location is the cell inner membrane. The protein is Multidrug resistance protein MdtC of Salmonella enteritidis PT4 (strain P125109).